Reading from the N-terminus, the 131-residue chain is Small ribosomal subunit protein uS8 (131 aa).

The protein belongs to the universal ribosomal protein uS8 family. In terms of assembly, part of the 30S ribosomal subunit. Contacts proteins S5 and S12.

One of the primary rRNA binding proteins, it binds directly to 16S rRNA central domain where it helps coordinate assembly of the platform of the 30S subunit. This is Small ribosomal subunit protein uS8 from Mesomycoplasma hyopneumoniae (strain 7448) (Mycoplasma hyopneumoniae).